The sequence spans 187 residues: Elongation factor P (187 aa).

Belongs to the elongation factor P family.

It localises to the cytoplasm. Its pathway is protein biosynthesis; polypeptide chain elongation. Functionally, involved in peptide bond synthesis. Stimulates efficient translation and peptide-bond synthesis on native or reconstituted 70S ribosomes in vitro. Probably functions indirectly by altering the affinity of the ribosome for aminoacyl-tRNA, thus increasing their reactivity as acceptors for peptidyl transferase. This is Elongation factor P from Corynebacterium glutamicum (strain R).